A 1218-amino-acid polypeptide reads, in one-letter code: Sodium bicarbonate cotransporter 3 (1218 aa).

Disordered regions lie at residues 1–31 (MEAD…KTSS) and 53–99 (HVPF…SQRV). The Extracellular segment spans residues 1–612 (MEADGAGEQM…DFKDALSLQC (612 aa)). 4 positions are modified to phosphoserine: Ser-57, Ser-60, Ser-89, and Ser-155. Residues 60 to 77 (SRRRHRHRGHKHHHRRRK) show a composition bias toward basic residues. Residues 78–90 (DKDSDKEDGRESP) show a composition bias toward basic and acidic residues. Residue Asn-176 is glycosylated (N-linked (GlcNAc...) asparagine). Phosphoserine occurs at positions 238, 247, and 263. The N-linked (GlcNAc...) asparagine glycan is linked to Asn-274. Disordered regions lie at residues 294 to 350 (SRAG…DIPR), 364 to 412 (KGQE…ENST), and 536 to 577 (SIRI…HAGP). Pro residues predominate over residues 308–318 (VPTPQNSPPSS). Low complexity predominate over residues 319-337 (PSLSRLTSRSSQQTQPQAP). Positions 383 to 396 (SPQSAPGNLDSSKS) are enriched in polar residues. 3 positions are modified to phosphoserine: Ser-386, Ser-404, and Ser-407. The N-linked (GlcNAc...) asparagine glycan is linked to Asn-410. A phosphoserine mark is found at Ser-411 and Ser-560. Over residues 567-576 (PPKEADHHAG) the composition is skewed to basic and acidic residues. A helical transmembrane segment spans residues 613–633 (LASILFLYCACMSPVITFGGL). Residues 634–641 (LGEATEGR) are Cytoplasmic-facing. The chain crosses the membrane as a helical span at residues 642–662 (ISAIESLFGASLTGIAYSLFA). The Extracellular portion of the chain corresponds to 663–699 (GQPLTILGSTGPVLVFEKILFKFCRDYHLSYLSLRTS). Residues 700-720 (IGLWTSFLCIVLVATDASSLV) traverse the membrane as a helical segment. At 721–729 (CYITRFTEE) the chain is on the cytoplasmic side. Residues 730 to 750 (AFAALICIIFIYEALEKLFHL) traverse the membrane as a helical segment. The Extracellular segment spans residues 751–821 (GEIYAFNMHN…MFVGSACGPH (71 aa)). Residues Cys-770 and Cys-772 are joined by a disulfide bond. Asn-780, Asn-790, and Asn-800 each carry an N-linked (GlcNAc...) asparagine glycan. Cys-806 and Cys-818 form a disulfide bridge. Residues 822-842 (GPYVPDVLFWCVVLFFTTFFL) form a helical membrane-spanning segment. Topologically, residues 843 to 865 (SSFLKQFKTKRYFPTKVRSTISD) are cytoplasmic. The chain crosses the membrane as a helical span at residues 866–886 (FAVFLTIVIMVAIDYLVGIPS). Over 887–912 (PKLHVPEKFEPTDPSRGWIISPLGDN) the chain is Extracellular. A helical membrane pass occupies residues 913–933 (PWWTLLIAAVPALLCTILIFM). Residues 934–958 (DQQITAVIINRKEHKLKKGAGYHLD) are Cytoplasmic-facing. The chain crosses the membrane as a helical span at residues 959–979 (LLMVAVMLGVCSIMGLPWFVA). Residues 980–1015 (ATVLSISHVNSLKVESECSAPGEQPKFLGIREQRVT) are Extracellular-facing. The essential for cell membrane localization and transport activity stretch occupies residues 1012–1135 (QRVTGLMIFI…MDLCFTKREL (124 aa)). Residues 1016-1036 (GLMIFILMGLSVFMTSVLKFI) traverse the membrane as a helical segment. The Cytoplasmic portion of the chain corresponds to 1037 to 1038 (PM). A helical transmembrane segment spans residues 1039–1059 (PVLYGVFLYMGVSSLKGIQFF). The Extracellular portion of the chain corresponds to 1060–1096 (DRIKLFGMPAKHQPDLIYLRYVPLWKVHVFTVVQLTC). Phosphoserine occurs at positions 1067 and 1078. The helical transmembrane segment at 1097 to 1117 (LVLLWVIKASAAAVVFPMMVL) threads the bilayer. Positions 1118 to 1140 (ALVFVRKLMDLCFTKRELSWLDD) are essential for interaction with RACK1. The Cytoplasmic portion of the chain corresponds to 1118-1218 (ALVFVRKLMD…KKYMDAETSL (101 aa)). Residues 1138-1140 (LDD) are CA2-binding. Residues 1148–1165 (KKEDDKKKKEKEEAERML) show a composition bias toward basic and acidic residues. The disordered stretch occupies residues 1148–1172 (KKEDDKKKKEKEEAERMLQGDGDTV). Residue Thr-1171 is modified to Phosphothreonine. Ser-1180, Thr-1188, Ile-1201, and Ser-1217 each carry phosphoserine. Residues 1215-1218 (ETSL) carry the PDZ-binding motif.

It belongs to the anion exchanger (TC 2.A.31) family. Interacts with USH1C. Forms a complex with ATP6V1B1 and NHERF1/EBP50. Interacts in a pH dependent-manner with CA2/carbonic anhydrase 2. Interacts with CFTR probably through NHERF1/EBP50. As to quaternary structure, interacts with RACK1. Post-translationally, undergoes lysosome-mediated degradation. In terms of processing, N-glycosylated. In terms of tissue distribution, expressed in aorta, ventricles, atrium, mesenteric artery, kidney, spleen, duodenum, jejunum, ileum, colon, lung, trachea, gastric fundus and pylorus, cerebrum, cerebellum, pancreas, liver, parotid gland, and epididymis. Expressed in the inner ear by cochlear outer and inner hair cells (at protein level). Highly expressed in testis and spleen. Specifically expressed in kidney. As to expression, specifically expressed in hippocampal neurons.

The protein resides in the basolateral cell membrane. It is found in the apical cell membrane. Its subcellular location is the cell projection. It localises to the stereocilium. The protein localises to the cell membrane. The catalysed reaction is hydrogencarbonate(in) + Na(+)(in) = hydrogencarbonate(out) + Na(+)(out). With respect to regulation, insensitive to stilbene derivatives. Its function is as follows. Electroneutral sodium- and bicarbonate-dependent cotransporter with a Na(+):HCO3(-) 1:1 stoichiometry. Mediates the sodium-dependent bicarbonate transport important for pH recovery after acid load as well as for regulation of steady-state pH in the duodenum and vascular smooth muscle cells. Plays a key role in macrophage acidification, mediating bicarbonate import into the cytoplasm which is crucial for net acid extrusion and maintenance of cytoplasmic pH during phagocytosis. Provides cellular bicarbonate for de novo purine and pyrimidine synthesis and is a key mediator of de novo nucleotide synthesis downstream of mTORC1 signaling in proliferating cells. In Rattus norvegicus (Rat), this protein is Sodium bicarbonate cotransporter 3 (Slc4a7).